A 485-amino-acid chain; its full sequence is Glycogen synthase (485 aa).

Position 15 (Lys15) interacts with ADP-alpha-D-glucose.

This sequence belongs to the glycosyltransferase 1 family. Bacterial/plant glycogen synthase subfamily.

The enzyme catalyses [(1-&gt;4)-alpha-D-glucosyl](n) + ADP-alpha-D-glucose = [(1-&gt;4)-alpha-D-glucosyl](n+1) + ADP + H(+). It functions in the pathway glycan biosynthesis; glycogen biosynthesis. In terms of biological role, synthesizes alpha-1,4-glucan chains using ADP-glucose. In Francisella philomiragia subsp. philomiragia (strain ATCC 25017 / CCUG 19701 / FSC 153 / O#319-036), this protein is Glycogen synthase.